The primary structure comprises 548 residues: Glutamyl-tRNA(Gln) amidotransferase subunit B, chloroplastic/mitochondrial (548 aa).

The protein belongs to the GatB/GatE family. GatB subfamily. As to quaternary structure, subunit of the heterotrimeric GatCAB amidotransferase (AdT) complex, composed of A, B and C subunits.

It is found in the mitochondrion. It localises to the plastid. Its subcellular location is the chloroplast. The catalysed reaction is L-glutamyl-tRNA(Gln) + L-glutamine + ATP + H2O = L-glutaminyl-tRNA(Gln) + L-glutamate + ADP + phosphate + H(+). Its function is as follows. Allows the formation of correctly charged Gln-tRNA(Gln) through the transamidation of misacylated Glu-tRNA(Gln) in chloroplasts and mitochondria. The reaction takes place in the presence of glutamine and ATP through an activated gamma-phospho-Glu-tRNA(Gln). In Sorghum bicolor (Sorghum), this protein is Glutamyl-tRNA(Gln) amidotransferase subunit B, chloroplastic/mitochondrial.